The following is a 186-amino-acid chain: ATP synthase subunit delta (186 aa).

Belongs to the ATPase delta chain family. As to quaternary structure, F-type ATPases have 2 components, F(1) - the catalytic core - and F(0) - the membrane proton channel. F(1) has five subunits: alpha(3), beta(3), gamma(1), delta(1), epsilon(1). F(0) has three main subunits: a(1), b(2) and c(10-14). The alpha and beta chains form an alternating ring which encloses part of the gamma chain. F(1) is attached to F(0) by a central stalk formed by the gamma and epsilon chains, while a peripheral stalk is formed by the delta and b chains.

It localises to the cell inner membrane. F(1)F(0) ATP synthase produces ATP from ADP in the presence of a proton or sodium gradient. F-type ATPases consist of two structural domains, F(1) containing the extramembraneous catalytic core and F(0) containing the membrane proton channel, linked together by a central stalk and a peripheral stalk. During catalysis, ATP synthesis in the catalytic domain of F(1) is coupled via a rotary mechanism of the central stalk subunits to proton translocation. In terms of biological role, this protein is part of the stalk that links CF(0) to CF(1). It either transmits conformational changes from CF(0) to CF(1) or is implicated in proton conduction. The sequence is that of ATP synthase subunit delta from Ruegeria sp. (strain TM1040) (Silicibacter sp.).